The following is a 388-amino-acid chain: Na(+)/H(+) antiporter NhaA (388 aa).

11 helical membrane passes run 14–34, 59–79, 95–115, 125–145, 154–174, 179–199, 219–239, 254–274, 287–307, 328–348, and 356–376; these read GGIILIIAAVLAMLMANSGFT, MLLWINDALMAVFFLLIGLEV, AFPVIAAIGGMIVPALLYLAF, GWAIPAATDIAFALGVLALLG, IFLMALAIIDDLGAIVIIALF, LSMVSLGVAAFAIVLLAVLNL, VLKSGVHATLAGVIVGFFIPL, VLHPWVAYLILPLFAFANAGV, ILPLGIIAGLLIGKPLGISLF, IMAVGILCGIGFTMSIFIASL, and ALINWAKLGILIGSLLSAVIG.

Belongs to the NhaA Na(+)/H(+) (TC 2.A.33) antiporter family.

It is found in the cell inner membrane. It carries out the reaction Na(+)(in) + 2 H(+)(out) = Na(+)(out) + 2 H(+)(in). Its function is as follows. Na(+)/H(+) antiporter that extrudes sodium in exchange for external protons. The chain is Na(+)/H(+) antiporter NhaA from Citrobacter koseri (strain ATCC BAA-895 / CDC 4225-83 / SGSC4696).